Here is a 21-residue protein sequence, read N- to C-terminus: Outer membrane protein A (21 aa).

A beta stranded membrane pass occupies residues 6 to 16 (TWYTGAKLGWS).

It belongs to the outer membrane OOP (TC 1.B.6) superfamily. OmpA family. As to quaternary structure, monomer and homodimer.

The protein localises to the cell outer membrane. With TolR probably plays a role in maintaining the position of the peptidoglycan cell wall in the periplasm. Acts as a porin with low permeability that allows slow penetration of small solutes; an internal gate slows down solute passage. In Actinobacillus lignieresii, this protein is Outer membrane protein A.